We begin with the raw amino-acid sequence, 545 residues long: Glucose-6-phosphate isomerase (545 aa).

The Proton donor role is filled by E351. Catalysis depends on residues H382 and K510.

Belongs to the GPI family.

The protein resides in the cytoplasm. The enzyme catalyses alpha-D-glucose 6-phosphate = beta-D-fructose 6-phosphate. Its pathway is carbohydrate biosynthesis; gluconeogenesis. It functions in the pathway carbohydrate degradation; glycolysis; D-glyceraldehyde 3-phosphate and glycerone phosphate from D-glucose: step 2/4. In terms of biological role, catalyzes the reversible isomerization of glucose-6-phosphate to fructose-6-phosphate. This is Glucose-6-phosphate isomerase from Shewanella putrefaciens (strain CN-32 / ATCC BAA-453).